A 230-amino-acid chain; its full sequence is N-(5'-phosphoribosyl)anthranilate isomerase (230 aa).

This sequence belongs to the TrpF family.

The enzyme catalyses N-(5-phospho-beta-D-ribosyl)anthranilate = 1-(2-carboxyphenylamino)-1-deoxy-D-ribulose 5-phosphate. It participates in amino-acid biosynthesis; L-tryptophan biosynthesis; L-tryptophan from chorismate: step 3/5. The protein is N-(5'-phosphoribosyl)anthranilate isomerase of Trichodesmium erythraeum (strain IMS101).